We begin with the raw amino-acid sequence, 257 residues long: Probable enoyl-CoA hydratase echA17 (257 aa).

It belongs to the enoyl-CoA hydratase/isomerase family.

It carries out the reaction a (3S)-3-hydroxyacyl-CoA = a (2E)-enoyl-CoA + H2O. It catalyses the reaction a 4-saturated-(3S)-3-hydroxyacyl-CoA = a (3E)-enoyl-CoA + H2O. Its function is as follows. Could possibly oxidize fatty acids using specific components. The polypeptide is Probable enoyl-CoA hydratase echA17 (echA17) (Mycobacterium avium (strain 104)).